Consider the following 547-residue polypeptide: uncharacterized protein (547 aa).

Over 1–19 (MVRLNHAASYFMPIFCSTR) the chain is Cytoplasmic. A helical membrane pass occupies residues 20-40 (PHIVILSALFSISLFSLFYAS). Topologically, residues 41–64 (SELLLHQYDDPLMFKPNSQDYFRT) are vacuolar. A helical membrane pass occupies residues 65–85 (FLLGLFSPFLYYFLKTFLFNI). The Cytoplasmic segment spans residues 86–89 (NQRF). The chain crosses the membrane as a helical span at residues 90–110 (LILNLIVDFPINDVFMLLILI). Residues 111-139 (GLAYPQVQDHEGGTIKHKECSWHIIPRQA) are Vacuolar-facing. A helical membrane pass occupies residues 140–160 (YIFGISWALGEFTICIIGNLF). Residues 161–340 (NYQEIADPNI…RFIAFSTAYQ (180 aa)) are Cytoplasmic-facing. Residue Ser225 is modified to Phosphoserine. The interval 237 to 271 (PIKPLRSSSSTYGSIRQQPHENKKQLHVPDNSQDD) is disordered. The segment covering 242 to 253 (RSSSSTYGSIRQ) has biased composition (polar residues). The helical transmembrane segment at 341–361 (LVTGLLLMILVVGSNIMLTIG) threads the bilayer. Over 362 to 394 (ESLILSMYFVYVRGHEGLFTPVVNYFGSRTISN) the chain is Vacuolar. The chain crosses the membrane as a helical span at residues 395 to 415 (FILCVIIPFISLNFLINTSIY). Over 416–523 (LRRELDDWFN…NWRALARNDS (108 aa)) the chain is Cytoplasmic. The chain crosses the membrane as a helical span at residues 524–544 (FVLGVMVSWSLLVFVTGILST). Over 545 to 547 (VYI) the chain is Vacuolar.

The protein localises to the vacuole membrane. This is an uncharacterized protein from Saccharomyces cerevisiae (strain ATCC 204508 / S288c) (Baker's yeast).